Here is a 98-residue protein sequence, read N- to C-terminus: MVKVRVEFLGGLDVIVNKQRVYDLDVPSQVENVGDLIDYIIENLITNKKDVEVFIENDSIRPGIITLINDTDWELENEKEYVIEDGDVISFTSTLHGG.

Position 98 is a 1-thioglycine (G98). Residue G98 forms a Glycyl lysine isopeptide (Gly-Lys) (interchain with K-? in acceptor proteins) linkage.

The protein belongs to the URM1 family. Post-translationally, C-terminal thiocarboxylation occurs in 2 steps, it is first acyl-adenylated (-COAMP) via the hesA/moeB/thiF part of UBA4, then thiocarboxylated (-COSH) via the rhodanese domain of UBA4.

It is found in the cytoplasm. Its pathway is tRNA modification; 5-methoxycarbonylmethyl-2-thiouridine-tRNA biosynthesis. Functionally, acts as a sulfur carrier required for 2-thiolation of mcm(5)S(2)U at tRNA wobble positions of cytosolic tRNA(Lys), tRNA(Glu) and tRNA(Gln). Serves as sulfur donor in tRNA 2-thiolation reaction by being thiocarboxylated (-COSH) at its C-terminus by the MOCS3 homolog UBA4. The sulfur is then transferred to tRNA to form 2-thiolation of mcm(5)S(2)U. Prior mcm(5) tRNA modification by the elongator complex is required for 2-thiolation. Also acts as a ubiquitin-like protein (UBL) that is covalently conjugated via an isopeptide bond to lysine residues of target proteins such as AHP1. The thiocarboxylated form serves as substrate for conjugation and oxidative stress specifically induces the formation of UBL-protein conjugates. This chain is Ubiquitin-related modifier 1, found in Candida glabrata (strain ATCC 2001 / BCRC 20586 / JCM 3761 / NBRC 0622 / NRRL Y-65 / CBS 138) (Yeast).